Consider the following 182-residue polypeptide: DOMON domain-containing protein Y73F4A.1 (182 aa).

Positions 1–18 (MFVLAIVFAFVFIPSSSS) are cleaved as a signal peptide. A DOMON domain is found at 26 to 143 (ELVSMNWNVK…CLNWMVVPGG (118 aa)). Residues N47 and N128 are each glycosylated (N-linked (GlcNAc...) asparagine).

The protein localises to the secreted. The chain is DOMON domain-containing protein Y73F4A.1 from Caenorhabditis elegans.